Reading from the N-terminus, the 452-residue chain is Alkane uptake protein A (452 aa).

The first 36 residues, 1–36 (MSERSVYMVLSPRFSVRAVSLAVAAVSASLSMPTSA), serve as a signal peptide directing secretion.

Belongs to the OmpP1/FadL family. Interacts with the inner membrane protein AupB.

The protein resides in the cell outer membrane. Required for growth on alkanes. Probably involved in the uptake of micelle-solubilized alkanes. The sequence is that of Alkane uptake protein A from Marinobacter nauticus (strain ATCC 49840 / DSM 8798 / CIP 103578 / SP17) (Marinobacter hydrocarbonoclasticus).